The primary structure comprises 338 residues: Ferredoxin--NADP reductase (338 aa).

7 residues coordinate FAD: D36, Q44, Y49, V89, F123, D290, and T331.

This sequence belongs to the ferredoxin--NADP reductase type 2 family. Homodimer. FAD is required as a cofactor.

It catalyses the reaction 2 reduced [2Fe-2S]-[ferredoxin] + NADP(+) + H(+) = 2 oxidized [2Fe-2S]-[ferredoxin] + NADPH. The protein is Ferredoxin--NADP reductase of Anaplasma phagocytophilum (strain HZ).